Reading from the N-terminus, the 43-residue chain is Large ribosomal subunit protein bL32 (43 aa).

The protein belongs to the bacterial ribosomal protein bL32 family.

The sequence is that of Large ribosomal subunit protein bL32 (rpmF) from Carsonella ruddii (strain PV).